We begin with the raw amino-acid sequence, 376 residues long: Carbohydrate sulfotransferase 14 (376 aa).

Over 1–39 (MFPRPLTPLAAPNGAEPLGRALRRAPLGRARAGLGGPPL) the chain is Cytoplasmic. The chain crosses the membrane as a helical; Signal-anchor for type II membrane protein span at residues 40–60 (LLPSMLMFAVIVASSGLLLMI). At 61–376 (ERGILAEMKP…PNVTKEACQQ (316 aa)) the chain is on the lumenal side. The N-linked (GlcNAc...) asparagine glycan is linked to Asn-110. 3'-phosphoadenylyl sulfate is bound by residues 155–161 (PKVACSN) and 213–221 (REPLERLLS). N-linked (GlcNAc...) asparagine glycosylation is present at Asn-368.

This sequence belongs to the sulfotransferase 2 family. In terms of tissue distribution, widely expressed. Expressed at high level in pituitary gland, placenta, uterus and thyroid.

It is found in the golgi apparatus membrane. The catalysed reaction is dermatan + n 3'-phosphoadenylyl sulfate = dermatan 4'-sulfate + n adenosine 3',5'-bisphosphate + n H(+). In terms of biological role, catalyzes the transfer of sulfate to position 4 of the N-acetylgalactosamine (GalNAc) residue of dermatan sulfate. Plays a pivotal role in the formation of 4-0-sulfated IdoA blocks in dermatan sulfate. Transfers sulfate to the C-4 hydroxyl of beta1,4-linked GalNAc that is substituted with an alpha-linked iduronic acid (IdoUA) at the C-3 hydroxyl. Transfers sulfate more efficiently to GalNAc residues in -IdoUA-GalNAc-IdoUA- than in -GlcUA-GalNAc-GlcUA-sequences. Has preference for partially desulfated dermatan sulfate. Addition of sulfate to GalNAc may occur immediately after epimerization of GlcUA to IdoUA. Appears to have an important role in the formation of the cerebellar neural network during postnatal brain development. This is Carbohydrate sulfotransferase 14 (CHST14) from Homo sapiens (Human).